Consider the following 360-residue polypeptide: Photosystem II protein D1 (360 aa).

3 helical membrane passes run 29-46 (YIGW…TAAS), 118-133 (HFLI…EWEL), and 142-156 (WIFV…AASA). H118 is a chlorophyll a binding site. Position 126 (W126) interacts with pheophytin a. 2 residues coordinate [CaMn4O5] cluster: D170 and E189. The chain crosses the membrane as a helical span at residues 197-218 (FHMAGVAGVFGGSLFSAMHGSL). H198 lines the chlorophyll a pocket. A quinone is bound by residues H215 and 264–265 (SF). H215 contacts Fe cation. H272 is a binding site for Fe cation. A helical transmembrane segment spans residues 274–288 (FLAAWPVVGIWLTAL). Residues H332, E333, D342, and A344 each coordinate [CaMn4O5] cluster. The propeptide occupies 345–360 (SNEILPVAISAPSVVG).

Belongs to the reaction center PufL/M/PsbA/D family. As to quaternary structure, PSII is composed of 1 copy each of membrane proteins PsbA, PsbB, PsbC, PsbD, PsbE, PsbF, PsbH, PsbI, PsbJ, PsbK, PsbL, PsbM, PsbT, PsbX, PsbY, PsbZ, Psb30/Ycf12, at least 3 peripheral proteins of the oxygen-evolving complex and a large number of cofactors. It forms dimeric complexes. The D1/D2 heterodimer binds P680, chlorophylls that are the primary electron donor of PSII, and subsequent electron acceptors. It shares a non-heme iron and each subunit binds pheophytin, quinone, additional chlorophylls, carotenoids and lipids. D1 provides most of the ligands for the Mn4-Ca-O5 cluster of the oxygen-evolving complex (OEC). There is also a Cl(-1) ion associated with D1 and D2, which is required for oxygen evolution. The PSII complex binds additional chlorophylls, carotenoids and specific lipids. serves as cofactor. In terms of processing, tyr-161 forms a radical intermediate that is referred to as redox-active TyrZ, YZ or Y-Z. Post-translationally, C-terminally processed by CTPA; processing is essential to allow assembly of the oxygen-evolving complex and thus photosynthetic growth.

The protein resides in the plastid. It localises to the chloroplast thylakoid membrane. It carries out the reaction 2 a plastoquinone + 4 hnu + 2 H2O = 2 a plastoquinol + O2. Its function is as follows. Photosystem II (PSII) is a light-driven water:plastoquinone oxidoreductase that uses light energy to abstract electrons from H(2)O, generating O(2) and a proton gradient subsequently used for ATP formation. It consists of a core antenna complex that captures photons, and an electron transfer chain that converts photonic excitation into a charge separation. The D1/D2 (PsbA/PsbD) reaction center heterodimer binds P680, the primary electron donor of PSII as well as several subsequent electron acceptors. The sequence is that of Photosystem II protein D1 from Ectocarpus siliculosus (Brown alga).